The chain runs to 398 residues: Succinate--CoA ligase [ADP-forming] subunit beta (398 aa).

Positions 9–253 constitute an ATP-grasp domain; that stretch reads KQVLAKYGVA…ESEEDPAELE (245 aa). Residues Lys46, 53-55, Glu108, Cys111, and Glu116 each bind ATP; that span reads GRG. Mg(2+) contacts are provided by Asn208 and Asp222. Substrate-binding positions include Asn273 and 330-332; that span reads GIM.

It belongs to the succinate/malate CoA ligase beta subunit family. As to quaternary structure, heterotetramer of two alpha and two beta subunits. The cofactor is Mg(2+).

It catalyses the reaction succinate + ATP + CoA = succinyl-CoA + ADP + phosphate. The catalysed reaction is GTP + succinate + CoA = succinyl-CoA + GDP + phosphate. Its pathway is carbohydrate metabolism; tricarboxylic acid cycle; succinate from succinyl-CoA (ligase route): step 1/1. In terms of biological role, succinyl-CoA synthetase functions in the citric acid cycle (TCA), coupling the hydrolysis of succinyl-CoA to the synthesis of either ATP or GTP and thus represents the only step of substrate-level phosphorylation in the TCA. The beta subunit provides nucleotide specificity of the enzyme and binds the substrate succinate, while the binding sites for coenzyme A and phosphate are found in the alpha subunit. The protein is Succinate--CoA ligase [ADP-forming] subunit beta of Paramagnetospirillum magneticum (strain ATCC 700264 / AMB-1) (Magnetospirillum magneticum).